A 786-amino-acid chain; its full sequence is E3 ubiquitin-protein ligase UHRF1 (786 aa).

The region spanning 1-78 (MWIQVRTMDG…IQLLVRQSLV (78 aa)) is the Ubiquitin-like domain. Phosphoserine is present on residues S76, S98, and S102. The interval 82–134 (PVPSSSGGSKERDSELSDTDSGCGLAQSESDKSSNSGEAANEPEGKADEDECD) is disordered. Tudor-like stretches follow at residues 139–213 (GLYK…ARAR) and 220–287 (DLQV…IERP). K283 is covalently cross-linked (Glycyl lysine isopeptide (Lys-Gly) (interchain with G-Cter in SUMO2)). A linker region spans residues 300 to 305 (RKSGPS). S302 carries the post-translational modification Phosphoserine; by PKA. A PHD-type zinc finger spans residues 303-370 (GPSCKHCKDD…EWYCPDCRID (68 aa)). Histone H3R2me0 binding regions lie at residues 337–341 (CDECD) and 357–359 (PPE). At S372 the chain carries Phosphoserine. K389 participates in a covalent cross-link: Glycyl lysine isopeptide (Lys-Gly) (interchain with G-Cter in SUMO2). K403 carries the N6-acetyllysine modification. Residues 423–586 (GPIPGIPVGT…FLVWRFLLRR (164 aa)) form the YDG domain. Positions 449–450 (HV) are required to promote base flipping. DNA contacts are provided by residues 467–468 (AG) and D473. Required for formation of a 5-methylcytosine-binding pocket stretches follow at residues 470–473 (YEDD) and 482–485 (YTGS). Residue K550 is modified to N6-acetyllysine; alternate. A Glycyl lysine isopeptide (Lys-Gly) (interchain with G-Cter in SUMO2); alternate cross-link involves residue K550. The segment at 626-679 (NSKQAALDKEEEDGEEGFTSPRKGKRKSKSAGGDGSSRGTPKKTKVEPYSLTTQ) is disordered. S645 carries the phosphoserine; by CDK1 modification. Residues S655 and S662 each carry the phosphoserine modification. A Glycyl lysine isopeptide (Lys-Gly) (interchain with G-Cter in SUMO2) cross-link involves residue K670. The segment at 717 to 756 (CICCQELVFRPITTVCQHNVCKDCLDRSFKAQVFSCPACR) adopts an RING-type zinc-finger fold.

As to quaternary structure, interacts with DNMT3A and DNMT3B. Interacts with DNMT1; the interaction is direct. Interacts with USP7; leading to its deubiquitination. Interacts with histone H3. Interacts with HDAC1, but not with HDAC2. Interacts with BLTP3A. Interacts with PML. Interacts with EHMT2. Binds methylated CpG containing oligonucleotides. Interacts with ZNF263; recruited to the SIX3 promoter along with other proteins involved in chromatin modification and transcriptional corepression where it contributes to transcriptional repression. Interacts with UHRF2. Interacts with FANCD2. Interacts with TET1 isoform 2; this interaction induces the recruitment of TET1 isoform 2 to replicating heterochromatin. Post-translationally, phosphorylation at Ser-302 of the linker region decreases the binding to H3K9me3. Phosphorylation at Ser-645 by CDK1 during M phase impairs interaction with USP7, preventing deubiquitination and leading to degradation by the proteasome. Ubiquitinated; which leads to proteasomal degradation. Autoubiquitinated; interaction with USP7 leads to deubiquitination and prevents degradation. Ubiquitination and degradation takes place during M phase, when phosphorylation at Ser-645 prevents interaction with USP7 and subsequent deubiquitination. Polyubiquitination may be stimulated by DNA damage.

The protein localises to the nucleus. It carries out the reaction S-ubiquitinyl-[E2 ubiquitin-conjugating enzyme]-L-cysteine + [acceptor protein]-L-lysine = [E2 ubiquitin-conjugating enzyme]-L-cysteine + N(6)-ubiquitinyl-[acceptor protein]-L-lysine.. The protein operates within protein modification; protein ubiquitination. Multidomain protein that acts as a key epigenetic regulator by bridging DNA methylation and chromatin modification. Specifically recognizes and binds hemimethylated DNA at replication forks via its YDG domain and recruits DNMT1 methyltransferase to ensure faithful propagation of the DNA methylation patterns through DNA replication. In addition to its role in maintenance of DNA methylation, also plays a key role in chromatin modification: through its tudor-like regions and PHD-type zinc fingers, specifically recognizes and binds histone H3 trimethylated at 'Lys-9' (H3K9me3) and unmethylated at 'Arg-2' (H3R2me0), respectively, and recruits chromatin proteins. Enriched in pericentric heterochromatin where it recruits different chromatin modifiers required for this chromatin replication. Also localizes to euchromatic regions where it negatively regulates transcription possibly by impacting DNA methylation and histone modifications. Has E3 ubiquitin-protein ligase activity by mediating the ubiquitination of target proteins such as histone H3 and PML. It is still unclear how E3 ubiquitin-protein ligase activity is related to its role in chromatin in vivo. Plays a role in DNA repair by cooperating with UHRF2 to ensure recruitment of FANCD2 to interstrand cross-links (ICLs) leading to FANCD2 activation. Plays a pivotal role in the establishment of correct spindle architecture by catalyzing the 'Lys-63'-linked ubiquitination of KIF11, thereby controlling KIF11 localization on the spindle. This is E3 ubiquitin-protein ligase UHRF1 (UHRF1) from Bos taurus (Bovine).